A 206-amino-acid polypeptide reads, in one-letter code: Transmembrane emp24 domain-containing protein bai (206 aa).

An N-terminal signal peptide occupies residues 1 to 20 (MARTLLILCTLMAWAWTGEA). Residues 21–172 (VMFKLTPNTQ…RDTNEKTNSR (152 aa)) are Lumenal-facing. Residues 30–140 (QKCLKEDIQA…LKPLEVDLKR (111 aa)) form the GOLD domain. The chain crosses the membrane as a helical span at residues 173-193 (VLFFSIFSMCCLLGLATWQVL). Residues 194–206 (YLRRYFKAKKLIE) are Cytoplasmic-facing.

The protein belongs to the EMP24/GP25L family.

The protein resides in the membrane. Its function is as follows. Eca and bai are essential, though not redundant, for dorsoventral patterning of the embryo. Specifically required during early embryogenesis for the activity of maternal tkv, while the zygotic tkv is not affected. The sequence is that of Transmembrane emp24 domain-containing protein bai from Drosophila ananassae (Fruit fly).